The following is a 365-amino-acid chain: Aminomethyltransferase (365 aa).

This sequence belongs to the GcvT family. As to quaternary structure, the glycine cleavage system is composed of four proteins: P, T, L and H.

The catalysed reaction is N(6)-[(R)-S(8)-aminomethyldihydrolipoyl]-L-lysyl-[protein] + (6S)-5,6,7,8-tetrahydrofolate = N(6)-[(R)-dihydrolipoyl]-L-lysyl-[protein] + (6R)-5,10-methylene-5,6,7,8-tetrahydrofolate + NH4(+). Its function is as follows. The glycine cleavage system catalyzes the degradation of glycine. This chain is Aminomethyltransferase, found in Chlorobium phaeovibrioides (strain DSM 265 / 1930) (Prosthecochloris vibrioformis (strain DSM 265)).